The sequence spans 65 residues: DNA gyrase inhibitor YacG (65 aa).

Zn(2+) contacts are provided by C10, C13, C29, and C33. The segment at 45-65 (EKAIPGAPDMSDSDGWSEDQY) is disordered. Over residues 55-65 (SDSDGWSEDQY) the composition is skewed to acidic residues.

The protein belongs to the DNA gyrase inhibitor YacG family. Interacts with GyrB. It depends on Zn(2+) as a cofactor.

In terms of biological role, inhibits all the catalytic activities of DNA gyrase by preventing its interaction with DNA. Acts by binding directly to the C-terminal domain of GyrB, which probably disrupts DNA binding by the gyrase. The sequence is that of DNA gyrase inhibitor YacG from Vibrio cholerae serotype O1 (strain ATCC 39315 / El Tor Inaba N16961).